We begin with the raw amino-acid sequence, 546 residues long: Immunoglobulin-like domain-containing receptor 1 (546 aa).

Residues 1-23 form the signal peptide; sequence MAWPKLPAPWLLLCTWLPAGCLS. The Ig-like V-type domain maps to 24 to 162; sequence LLVTVQHTER…TSGDPDKEVK (139 aa). At 24–167 the chain is on the extracellular side; the sequence is LLVTVQHTER…DKEVKLIVLH (144 aa). Cys-45 and Cys-145 form a disulfide bridge. A helical transmembrane segment spans residues 168–188; it reads WLTVIFIILGALLLLLLIGVC. Over 189 to 546 the chain is Cytoplasmic; the sequence is WCQCCPQYCC…SSHSGRSVVI (358 aa). The disordered stretch occupies residues 399–546; that stretch reads WSGRHRSSRL…SSHSGRSVVI (148 aa). Over residues 442-457 the composition is skewed to basic and acidic residues; that stretch reads RCQERPRRPSPRESTQ. Basic residues predominate over residues 458-467; it reads RHGRRRRHRS. Phosphoserine occurs at positions 499 and 501. Basic and acidic residues predominate over residues 527–539; sequence GSVERRSEKDSSH.

Belongs to the immunoglobulin superfamily. LISCH7 family. As to quaternary structure, homooligomer. Interacts with MARVELD2 and OCLN; the interaction is required to recruit MARVELD2 to tricellular contacts. Interacts (via C-terminus) with TRA2A, TRA2B and SRSF1. Interacts with PLSCR1. As to expression, mainly expressed in prostate and to a lower extent in testis, pancreas, kidney, heart and liver.

It localises to the cell membrane. The protein resides in the cell junction. It is found in the tight junction. The protein localises to the cytoplasm. Its subcellular location is the cytosol. Maintains epithelial barrier function by recruiting MARVELD2/tricellulin to tricellular tight junctions (tTJs). Crucial for normal hearing by maintaining the structural and functional integrity of tTJs, which are critical for the survival of auditory neurosensory HCs. Mediates fatty acids and lipoproteins-stimulated CCK/cholecystokinin secretion in the small intestine. In the inner ear, may regulate alternative pre-mRNA splicing via binding to TRA2A, TRA2B and SRSF1. In terms of biological role, (Microbial infection) Promotes influenza virus infection by inhibiting viral nucleoprotein NP binding to PLSCR1 and thereby PLSCR1-mediated antiviral activity. In Homo sapiens (Human), this protein is Immunoglobulin-like domain-containing receptor 1.